The following is a 637-amino-acid chain: 1-deoxy-D-xylulose-5-phosphate synthase (637 aa).

Thiamine diphosphate is bound by residues H76 and 117-119; that span reads AHS. D148 contributes to the Mg(2+) binding site. Residues 149–150, N177, Y287, and E369 each bind thiamine diphosphate; that span reads GA. Mg(2+) is bound at residue N177.

The protein belongs to the transketolase family. DXPS subfamily. Homodimer. Mg(2+) is required as a cofactor. It depends on thiamine diphosphate as a cofactor.

It carries out the reaction D-glyceraldehyde 3-phosphate + pyruvate + H(+) = 1-deoxy-D-xylulose 5-phosphate + CO2. Its pathway is metabolic intermediate biosynthesis; 1-deoxy-D-xylulose 5-phosphate biosynthesis; 1-deoxy-D-xylulose 5-phosphate from D-glyceraldehyde 3-phosphate and pyruvate: step 1/1. In terms of biological role, catalyzes the acyloin condensation reaction between C atoms 2 and 3 of pyruvate and glyceraldehyde 3-phosphate to yield 1-deoxy-D-xylulose-5-phosphate (DXP). In Pelagibacter ubique (strain HTCC1062), this protein is 1-deoxy-D-xylulose-5-phosphate synthase.